A 949-amino-acid chain; its full sequence is Translation initiation factor IF-2 (949 aa).

3 disordered regions span residues 61–122 (IQAN…PIIK), 139–159 (VENTPKAVSHSQIEKAKQKLQ), and 171–284 (LTQS…NKSH). Basic and acidic residues-rich tracts occupy residues 112-122 (KKKEAPAPIIK) and 150-159 (QIEKAKQKLQ). Over residues 174 to 190 (SNTNTTNNANSASNVSN) the composition is skewed to low complexity. Residues 191 to 208 (AKKEISEVKKQEQEIKRH) show a composition bias toward basic and acidic residues. Over residues 209–220 (ENIKRRTGFRVI) the composition is skewed to basic residues. Residues 249–264 (EDIKKEWQEKDKQETK) are compositionally biased toward basic and acidic residues. Positions 448–617 (ERPPVVTIMG…LIQADIMELK (170 aa)) constitute a tr-type G domain. Residues 457 to 464 (GHVDHGKT) form a G1 region. 457 to 464 (GHVDHGKT) is a binding site for GTP. The segment at 482-486 (GITQH) is G2. The segment at 503 to 506 (DTPG) is G3. GTP is bound by residues 503–507 (DTPGH) and 557–560 (NKMD). A G4 region spans residues 557–560 (NKMD). Residues 593–595 (SAK) form a G5 region.

It belongs to the TRAFAC class translation factor GTPase superfamily. Classic translation factor GTPase family. IF-2 subfamily.

The protein localises to the cytoplasm. In terms of biological role, one of the essential components for the initiation of protein synthesis. Protects formylmethionyl-tRNA from spontaneous hydrolysis and promotes its binding to the 30S ribosomal subunits. Also involved in the hydrolysis of GTP during the formation of the 70S ribosomal complex. This chain is Translation initiation factor IF-2 (infB), found in Helicobacter pylori (strain J99 / ATCC 700824) (Campylobacter pylori J99).